The following is a 648-amino-acid chain: MLEAWMPKSGKPSTGTTPADFAPTQWNIIYLLMTVGSLVAALSISIQPLLLDKIFGIAFEKEGAVNADIQVVAEIVSIVCVGWFGLLSDRIGRVRIIATGFLIAVAGAAMSLLSLQIGLAFGAAGLVLFYLTRVLLTVGADTVQLQLSTLVGDVSSRANRPRLMGNLVFMMVFGGTMLSAIIMQMADYKGGVFIIMCLPLLIGIAGFQMTRESLRDVAQPQQAPTGDEHPLRQVWSVITSDPRLQLAFAAAFYTRADVIILSLFFSLWCISVSDLVGVTRTYATAHAAVMIGLLGLAVLAAIPLWRSFIERHSRISAIGASLSLAAVGYIWLGMFANPFNWLVALPLLMVGIGHAGCFVTLQVLTVDVSPKPILGAMVGAGYLVGGLGTVMLVQSGGYYFDALGPRAPFILMGTGKMLVTLYAAWLLANGIDETCDHHLKSTRKVDWKPLVFLTAALPFVWLIGRSVIEGYFSNGSLGEAPVGFVNRYLGDWAFTFLIISLSMRPVQEITGIKSLAKYRRMIGLFAFFYAVLHVLAYVTLEWALNLGDMASDIYKRPFILLGLAAFLLLIPLAFTSTNSQIKKIGGKRWKRLHRATYVINALVALHFILAANHENGEPYVYAAAVIVLLWYRFYQWRGGNVLRALRIG.

The tract at residues 1–431 (MLEAWMPKSG…YAAWLLANGI (431 aa)) is major facilitator domain. Transmembrane regions (helical) follow at residues 28–49 (IIYLLMTVGSLVAALSISIQPL), 69–87 (IQVVAEIVSIVCVGWFGLL), 94–113 (VRIIATGFLIAVAGAAMSLL), 119–143 (LAFGAAGLVLFYLTRVLLTVGADTV), 163–182 (LMGNLVFMMVFGGTMLSAII), 188–207 (YKGGVFIIMCLPLLIGIAGF), 252–273 (FYTRADVIILSLFFSLWCISVS), 285–305 (AHAAVMIGLLGLAVLAAIPLW), 317–335 (AIGASLSLAAVGYIWLGMF), 341–361 (WLVALPLLMVGIGHAGCFVTL), 373–395 (ILGAMVGAGYLVGGLGTVMLVQS), 407–428 (APFILMGTGKMLVTLYAAWLLA), 449–468 (PLVFLTAALPFVWLIGRSVI), 488–506 (YLGDWAFTFLIISLSMRPV), 518–538 (YRRMIGLFAFFYAVLHVLAYV), 558–574 (FILLGLAAFLLLIPLAF), 595–612 (ATYVINALVALHFILAAN), and 618–634 (PYVYAAAVIVLLWYRFY). A ferric reductase-like domain, required for correct magnetite crystal formation region spans residues 444–645 (KVDWKPLVFL…WRGGNVLRAL (202 aa)).

The protein in the N-terminal section; belongs to the major facilitator superfamily. As to quaternary structure, probably interacts with FtsZ-like and MamY proteins.

The protein resides in the magnetosome membrane. Its function is as follows. Required for correct biomineralization of the magnetosome; probably converts and then transports some form of iron. It is partially functionally redundant with MamH. May function with MamX, MamY amd Mms6 in biomineralization. Despite its strong similarity to MsrQ (AC V6EX82) this protein does not genetically interact with bona fide MsrP (AC V6F0A4), which is encoded elsewhere in the genome. In Magnetospirillum gryphiswaldense (strain DSM 6361 / JCM 21280 / NBRC 15271 / MSR-1), this protein is Magnetosome protein MamZ.